The chain runs to 153 residues: MLFFFFSSKKTVRVCRQLKTVTVLIVPVLPVYTNKVLCCSQCDWHEPANVYSIEQRRSHDDDLPTIKGSDASTQQYERKTYITDASPESQNLFLSKSKEEGVIFLCIQIKKLLGKWESKLKIIKFNKLAKYVYEGNQFFLFIFFLSICQIRNF.

Belongs to the UPF0768 family.

This Schizosaccharomyces pombe (strain 972 / ATCC 24843) (Fission yeast) protein is UPF0768 protein PB2B2.18.